A 337-amino-acid chain; its full sequence is Hsp90 co-chaperone Cdc37-like 1 (337 aa).

Pro residues predominate over residues 1–11 (MEQPWPPPGPW). Positions 1–42 (MEQPWPPPGPWSLPRAEGEAEEENDLDVFPSSPRCPQLPGGS) are disordered. The segment at 2 to 171 (EQPWPPPGPW…YEQKIRHFGM (170 aa)) is self-association. Residues Ser-32 and Ser-88 each carry the phosphoserine modification. Positions 85–122 (NSESLDQEHAKAQIAVSELRQREEEWRQKEEALVQREK) form a coiled coil. The interval 147–277 (KDTEDEDKSE…SRVRLYSQSQ (131 aa)) is self-association and interaction with Hsp90. Residues 267 to 337 (KSRVRLYSQS…DDEPKMMDTV (71 aa)) are interaction with Hsp70. A required for interaction with STIP1 region spans residues 278 to 337 (SFQPMTVQNHVPHSGVGSIGLLESLPQNPDYLQYSINTALCSLNSVVHKEDDEPKMMDTV).

It belongs to the CDC37 family. As to quaternary structure, self-associates. Forms complexes with Hsp70 and Hsp90. Interacts with CDC37, FKBP4, PPID and STIP1.

The protein resides in the cytoplasm. In terms of biological role, co-chaperone that binds to numerous proteins and promotes their interaction with Hsp70 and Hsp90. The polypeptide is Hsp90 co-chaperone Cdc37-like 1 (CDC37L1) (Pongo abelii (Sumatran orangutan)).